A 188-amino-acid chain; its full sequence is 3-deoxy-D-manno-octulosonate 8-phosphate phosphatase KdsC (188 aa).

Positions 32 and 34 each coordinate Mg(2+). Substrate is bound by residues aspartate 34, 55–59 (NVRDG), arginine 63, arginine 78, arginine 86, and lysine 102. Residue aspartate 125 participates in Mg(2+) binding.

This sequence belongs to the KdsC family. Homotetramer. The cofactor is Mg(2+).

It catalyses the reaction 3-deoxy-alpha-D-manno-2-octulosonate-8-phosphate + H2O = 3-deoxy-alpha-D-manno-oct-2-ulosonate + phosphate. The protein operates within carbohydrate biosynthesis; 3-deoxy-D-manno-octulosonate biosynthesis; 3-deoxy-D-manno-octulosonate from D-ribulose 5-phosphate: step 3/3. Its pathway is bacterial outer membrane biogenesis; lipopolysaccharide biosynthesis. Catalyzes the hydrolysis of 3-deoxy-D-manno-octulosonate 8-phosphate (KDO 8-P) to 3-deoxy-D-manno-octulosonate (KDO) and inorganic phosphate. The chain is 3-deoxy-D-manno-octulosonate 8-phosphate phosphatase KdsC from Escherichia coli (strain K12).